The primary structure comprises 161 residues: 2-C-methyl-D-erythritol 2,4-cyclodiphosphate synthase (161 aa).

A divalent metal cation contacts are provided by Asp-8 and His-10. 4-CDP-2-C-methyl-D-erythritol 2-phosphate contacts are provided by residues 8 to 10 (DVH) and 34 to 35 (HS). His-42 provides a ligand contact to a divalent metal cation. 4-CDP-2-C-methyl-D-erythritol 2-phosphate contacts are provided by residues 56-58 (DIG), 61-65 (FPDTD), 100-106 (AQSPKMA), 132-135 (TTEE), and Phe-139.

Belongs to the IspF family. In terms of assembly, homotrimer. A divalent metal cation is required as a cofactor.

It catalyses the reaction 4-CDP-2-C-methyl-D-erythritol 2-phosphate = 2-C-methyl-D-erythritol 2,4-cyclic diphosphate + CMP. It participates in isoprenoid biosynthesis; isopentenyl diphosphate biosynthesis via DXP pathway; isopentenyl diphosphate from 1-deoxy-D-xylulose 5-phosphate: step 4/6. Its function is as follows. Involved in the biosynthesis of isopentenyl diphosphate (IPP) and dimethylallyl diphosphate (DMAPP), two major building blocks of isoprenoid compounds. Catalyzes the conversion of 4-diphosphocytidyl-2-C-methyl-D-erythritol 2-phosphate (CDP-ME2P) to 2-C-methyl-D-erythritol 2,4-cyclodiphosphate (ME-CPP) with a corresponding release of cytidine 5-monophosphate (CMP). The polypeptide is 2-C-methyl-D-erythritol 2,4-cyclodiphosphate synthase (Clostridioides difficile (strain 630) (Peptoclostridium difficile)).